Consider the following 516-residue polypeptide: Circadian clock oscillator protein KaiC (516 aa).

KaiC domains follow at residues 1-244 (MNQP…INIF) and 258-516 (ARIS…TLPE). The ATP site is built by G46, T47, G48, K49, T50, L51, S86, K221, L222, R223, T225, H227, T237, T287, G288, T289, G290, K291, T292, and L293. Mg(2+) is bound at residue T50. T292 lines the Mg(2+) pocket. Residue E315 participates in Mg(2+) binding. W328 serves as a coordination point for ATP. At S428 the chain carries Phosphoserine; by autocatalysis. Position 429 is a phosphothreonine; by autocatalysis (T429). R448, K454, M455, R456, S458, H460, and K462 together coordinate ATP.

It belongs to the KaiC family. In terms of assembly, homohexamer; hexamerization is dependent on ATP-binding. The KaiABC complex composition changes during the circadian cycle to control KaiC phosphorylation. Complexes KaiC(6), KaiA(2-4):KaiC(6), KaiB(6):KaiC(6) and KaiC(6):KaiB(6):KaiA(12) are among the most important forms, many form cooperatively. KaiC interacts with SasA, activating its autokinase function and leading to RpaA activation. The cofactor is Mg(2+). Phosphorylated on serine and threonine residues by autocatalysis. Has a 4 step phosphorylation cycle; the autokinase acts first on Thr-429, then Ser-428. When Ser-428 is modified KaiC switches to an autophosphatase mode, acting first on phospho-Thr-429 then phospho-Ser-428.

It carries out the reaction L-seryl-[protein] + ATP = O-phospho-L-seryl-[protein] + ADP + H(+). The enzyme catalyses L-threonyl-[protein] + ATP = O-phospho-L-threonyl-[protein] + ADP + H(+). The catalysed reaction is ATP + H2O = ADP + phosphate + H(+). With respect to regulation, the interaction with KaiA enhances its phosphorylation status, while the interaction with KaiB decreases it. In terms of biological role, central component of the KaiABC oscillator complex, which constitutes the main circadian regulator in cyanobacteria. Complex composition changes during the circadian cycle to control KaiC phosphorylation. KaiA stimulates KaiC autophosphorylation, while KaiB sequesters KaiA, leading to KaiC autodephosphorylation. Clock output pathways impact the RpaA transcriptional regulator. KaiC enhances the autophosphorylation activity of SasA, which then transfers its phosphate group to RpaA to activate it. KaiB and KaiC together enhance the phospho-RpaA dephosphatase activity of CikA. Functionally, has a weak, temperature-independent ATPase activity; ATPase activity defines the circadian period. The phosphorylation state of KaiC modulates its ATPase activity and effects KaiB binding. This Picosynechococcus sp. (strain ATCC 27264 / PCC 7002 / PR-6) (Agmenellum quadruplicatum) protein is Circadian clock oscillator protein KaiC.